Here is a 1110-residue protein sequence, read N- to C-terminus: Nitric oxide synthase 3 (1110 aa).

The segment at 1 to 74 (MGNFKSVGQE…PPEGPKFPRV (74 aa)) is disordered. Residues 15–27 (CGLGLGLGLGLCG) are compositionally biased toward gly residues. Over residues 31–40 (PASPAPVSAS) the composition is skewed to low complexity. Positions 47–69 (SSPPLPLPAPEHSPPLTRPPEGP) are enriched in pro residues. Zn(2+) is bound by residues Cys97 and Cys102. The interval 101–489 (RCLGSLVFPR…PDPWKGSGTK (389 aa)) is interaction with NOSIP. (6R)-L-erythro-5,6,7,8-tetrahydrobiopterin is bound at residue Ser105. Residue Ser117 is modified to Phosphoserine. Cys187 contacts heme b. The L-arginine site is built by Gln250, Trp359, Tyr360, and Glu364. Arg368 lines the (6R)-L-erythro-5,6,7,8-tetrahydrobiopterin pocket. Residue Asn369 participates in L-arginine binding. Ala449, Trp450, and Phe463 together coordinate (6R)-L-erythro-5,6,7,8-tetrahydrobiopterin. Tyr478 lines the heme b pocket. Thr498 is subject to Phosphothreonine. FMN-binding residues include Ser529, Glu530, Thr531, Arg533, Ser575, and Thr576. 3 positions are modified to phosphoserine: Ser618, Ser636, and Ser641. FMN-binding residues include Ser657, Cys664, Glu690, and Gln694. Arg779 serves as a coordination point for NADP(+). Residue His801 coordinates FAD. Residues 821–848 (EDPPPPAESVAVEQLEKGSPGGPPPGWV) are disordered. Ser839 carries the phosphoserine modification. Residues Arg941, Tyr943, Ser944, Thr959, Ala961, Tyr965, Val978, Cys979, and Ser980 each coordinate FAD. NADP(+)-binding residues include Thr1019, Arg1052, Ser1081, Arg1082, and Lys1088.

It belongs to the NOS family. In terms of assembly, homodimer. Interacts with NOSIP and NOSTRIN. Interacts with HSP90AB1. Forms a complex with ASL, ASS1 and SLC7A1; the complex regulates cell-autonomous L-arginine synthesis and citrulline recycling while channeling extracellular L-arginine to nitric oxide synthesis pathway. It depends on heme b as a cofactor. FAD serves as cofactor. FMN is required as a cofactor. The cofactor is (6R)-L-erythro-5,6,7,8-tetrahydrobiopterin.

It localises to the membrane. Its subcellular location is the caveola. It is found in the cytoplasm. The protein localises to the cytoskeleton. The protein resides in the golgi apparatus. It localises to the cell membrane. The catalysed reaction is 2 L-arginine + 3 NADPH + 4 O2 + H(+) = 2 L-citrulline + 2 nitric oxide + 3 NADP(+) + 4 H2O. Stimulated by calcium/calmodulin. Inhibited by NOSIP and NOSTRIN. In terms of biological role, produces nitric oxide (NO) which is implicated in vascular smooth muscle relaxation through a cGMP-mediated signal transduction pathway. NO mediates vascular endothelial growth factor (VEGF)-induced angiogenesis in coronary vessels and promotes blood clotting through the activation of platelets. The sequence is that of Nitric oxide synthase 3 (NOS3) from Cavia porcellus (Guinea pig).